The sequence spans 496 residues: Transmembrane transporter swnT (496 aa).

5 helical membrane-spanning segments follow: residues 40 to 60, 72 to 92, 124 to 144, 162 to 182, and 191 to 211; these read LSAI…PLIL, VFWG…TLAE, AMIS…SVPL, WMGF…ACFE, and AFLL…FAMA. A glycan (N-linked (GlcNAc...) asparagine) is linked at N225. Transmembrane regions (helical) follow at residues 270–290, 314–334, 368–388, 396–416, 434–454, and 467–487; these read LLWT…AVLV, AAAI…VWSI, PIWS…LYLA, LIAT…VLVL, GLVA…FYCF, and YVSG…ILYA.

Belongs to the amino acid-polyamine-organocation (APC) superfamily. Amino acid/choline transporter (ACT) (TC 2.A.3.4) family.

Its subcellular location is the membrane. Transmembrane transporter; part of the gene cluster that mediates the biosynthesis of swainsonine, a cytotoxic fungal alkaloid and a potential cancer therapy drug. Does not mediate the secretion of SW and the exact role of swnT in SW biosynthesis remains to be determined. This chain is Transmembrane transporter swnT, found in Metarhizium robertsii (strain ARSEF 23 / ATCC MYA-3075) (Metarhizium anisopliae (strain ARSEF 23)).